An 804-amino-acid chain; its full sequence is ATP-dependent RNA helicase dbp4 (804 aa).

Residues 1–24 (MAPANAPRNGKYAKSSQRTLKRKR) form a disordered region. A Q motif motif is present at residues 46–74 (KAFTDLPLSEPTLSGLSASHYKTLTDIQS). In terms of domain architecture, Helicase ATP-binding spans 77 to 251 (VSHALKGRDI…RLSLQDPEYV (175 aa)). 90 to 97 (AKTGSGKT) serves as a coordination point for ATP. The short motif at 199 to 202 (DEAD) is the DEAD box element. A Helicase C-terminal domain is found at 277–436 (KLDILWSFIR…SIKNQLQNMC (160 aa)). Disordered stretches follow at residues 493–541 (GDDT…DRMF), 589–615 (DKQLEVGGSSDESGSDSEAETGKKDVK), and 695–804 (LADV…GLLG). Residues 521 to 541 (DEKKSKKKDAPQVRTKYDRMF) show a composition bias toward basic and acidic residues. Residues 695–705 (LADVEDKELVK) are compositionally biased toward basic and acidic residues. The segment covering 706–715 (QKRREKKEKR) has biased composition (basic residues).

It belongs to the DEAD box helicase family. DDX10/DBP4 subfamily. In terms of assembly, interacts with the U3 and U14 snoRNAs. Associates with pre-ribosomal complexes.

The protein localises to the nucleus. Its subcellular location is the nucleolus. It carries out the reaction ATP + H2O = ADP + phosphate + H(+). ATP-dependent RNA helicase required for ribosome biogenesis. Involved in the release of U14 snoRNA in pre-ribosomal complexes. Required for pre-rRNA cleavage at site A2. The polypeptide is ATP-dependent RNA helicase dbp4 (dbp4) (Aspergillus terreus (strain NIH 2624 / FGSC A1156)).